Reading from the N-terminus, the 388-residue chain is Dual specificity mitogen-activated protein kinase kinase 1 (388 aa).

A disordered region spans residues 1–20 (PIQLNPAPDGSAVNGTSSAE). One can recognise a Protein kinase domain in the interval 61–356 (FEKISELGAG…LKQLMIHAFI (296 aa)). Residues 67-75 (LGAGNGGVV) and K90 contribute to the ATP site. D183 (proton acceptor) is an active-site residue. S211 and S215 each carry phosphoserine; by RAF. The tract at residues 275–299 (DSPVTETSPRQRAPGRPMSSYGSDS) is disordered.

Belongs to the protein kinase superfamily. STE Ser/Thr protein kinase family. MAP kinase kinase subfamily. Post-translationally, MAPKK is itself dependent on Ser/Thr phosphorylation for activity catalyzed by MAP kinase kinase kinases (RAF or MEKK1).

Its subcellular location is the cytoplasm. It is found in the cytoskeleton. The protein resides in the microtubule organizing center. It localises to the centrosome. The protein localises to the spindle pole body. Its subcellular location is the nucleus. It catalyses the reaction L-seryl-[protein] + ATP = O-phospho-L-seryl-[protein] + ADP + H(+). The enzyme catalyses L-threonyl-[protein] + ATP = O-phospho-L-threonyl-[protein] + ADP + H(+). The catalysed reaction is L-tyrosyl-[protein] + ATP = O-phospho-L-tyrosyl-[protein] + ADP + H(+). Dual specificity protein kinase which acts as an essential component of the MAP kinase signal transduction pathway. Binding of extracellular ligands such as growth factors, cytokines and hormones to their cell-surface receptors activates RAS and this initiates RAF1 activation. RAF1 then further activates the dual-specificity protein kinases MAP2K1/MEK1 and MAP2K2/MEK2. Both MAP2K1/MEK1 and MAP2K2/MEK2 function specifically in the MAPK/ERK cascade, and catalyze the concomitant phosphorylation of a threonine and a tyrosine residue in a Thr-Glu-Tyr sequence located in the extracellular signal-regulated kinases MAPK3/ERK1 and MAPK1/ERK2, leading to their activation and further transduction of the signal within the MAPK/ERK cascade. Depending on the cellular context, this pathway mediates diverse biological functions such as cell growth, adhesion, survival and differentiation predominantly through the regulation of transcription, metabolism and cytoskeletal rearrangements. In Serinus canaria (Island canary), this protein is Dual specificity mitogen-activated protein kinase kinase 1 (MAP2K1).